Here is a 459-residue protein sequence, read N- to C-terminus: Xylose/arabinose-binding protein XacG (459 aa).

A helical membrane pass occupies residues 19–36 (ALTVGAAAGIAGCTGGGG). A disordered region spans residues 27-68 (GIAGCTGGGGTETESTESGNGNGSGGSTDDTETSGSSSGESW).

The protein belongs to the bacterial solute-binding protein 1 family. In terms of assembly, the complex is composed of two ATP-binding proteins (XacJ and XacK), two transmembrane proteins (XacH and XacI) and a solute-binding protein (XacG).

Its subcellular location is the cell membrane. Its function is as follows. Part of the ABC transporter complex XacGHIJK involved in the uptake of xylose and arabinose. This Haloferax volcanii (strain ATCC 29605 / DSM 3757 / JCM 8879 / NBRC 14742 / NCIMB 2012 / VKM B-1768 / DS2) (Halobacterium volcanii) protein is Xylose/arabinose-binding protein XacG.